The chain runs to 373 residues: Bilirubin reductase (373 aa).

Glutamine 92 is a binding site for FMN. The Proton donor role is filled by arginine 168. Lysine 215 contacts FMN. [4Fe-4S] cluster contacts are provided by cysteine 344, cysteine 347, cysteine 351, and cysteine 363.

Belongs to the NADH:flavin oxidoreductase/NADH oxidase family. The cofactor is FMN. [4Fe-4S] cluster serves as cofactor.

The catalysed reaction is urobilinogen + 4 A = (4Z,15Z)-bilirubin IXalpha + 4 AH2. It catalyses the reaction urobilinogen + 2 A = (4Z,15Z)-mesobilirubin IXalpha + 2 AH2. The protein operates within porphyrin-containing compound metabolism; protoheme degradation. Bilirubin reductase that catalyzes reduction of mesobilirubin and/or bilirubin to urobilinogen, a key step during heme degradation. Cooperates with BilS, which is probably involved in electron transfer for BilR. Urobilinogen then spontaneously degrades into urobilin, which gives urine its distinctive yellow color. This chain is Bilirubin reductase, found in Clostridium symbiosum (strain WAL-14163).